The primary structure comprises 396 residues: Ornithine aminotransferase 2 (396 aa).

Residue K255 is modified to N6-(pyridoxal phosphate)lysine.

The protein belongs to the class-III pyridoxal-phosphate-dependent aminotransferase family. OAT subfamily. Requires pyridoxal 5'-phosphate as cofactor.

Its subcellular location is the cytoplasm. It carries out the reaction a 2-oxocarboxylate + L-ornithine = L-glutamate 5-semialdehyde + an L-alpha-amino acid. It participates in amino-acid biosynthesis; L-proline biosynthesis; L-glutamate 5-semialdehyde from L-ornithine: step 1/1. Its function is as follows. Catalyzes the interconversion of ornithine to glutamate semialdehyde. This chain is Ornithine aminotransferase 2, found in Staphylococcus aureus (strain MRSA252).